The primary structure comprises 462 residues: Argininosuccinate lyase (462 aa).

It belongs to the lyase 1 family. Argininosuccinate lyase subfamily.

Its subcellular location is the cytoplasm. It catalyses the reaction 2-(N(omega)-L-arginino)succinate = fumarate + L-arginine. It functions in the pathway amino-acid biosynthesis; L-arginine biosynthesis; L-arginine from L-ornithine and carbamoyl phosphate: step 3/3. This is Argininosuccinate lyase from Bacillus cytotoxicus (strain DSM 22905 / CIP 110041 / 391-98 / NVH 391-98).